The chain runs to 282 residues: 3-methyl-2-oxobutanoate hydroxymethyltransferase (282 aa).

The Mg(2+) site is built by D44 and D83. 3-methyl-2-oxobutanoate-binding positions include 44-45 (DS), D83, and K112. E114 contacts Mg(2+). Catalysis depends on E181, which acts as the Proton acceptor.

This sequence belongs to the PanB family. Homodecamer; pentamer of dimers. Mg(2+) serves as cofactor.

It localises to the cytoplasm. The enzyme catalyses 3-methyl-2-oxobutanoate + (6R)-5,10-methylene-5,6,7,8-tetrahydrofolate + H2O = 2-dehydropantoate + (6S)-5,6,7,8-tetrahydrofolate. It participates in cofactor biosynthesis; coenzyme A biosynthesis. Functionally, catalyzes the reversible reaction in which hydroxymethyl group from 5,10-methylenetetrahydrofolate is transferred onto alpha-ketoisovalerate to form ketopantoate. This is 3-methyl-2-oxobutanoate hydroxymethyltransferase from Pyrococcus abyssi (strain GE5 / Orsay).